The sequence spans 452 residues: Cobyrinate a,c-diamide synthase (452 aa).

The region spanning 244–437 is the GATase cobBQ-type domain; that stretch reads KIAYAYDEAF…VHINLYTYKE (194 aa). Cys-327 functions as the Nucleophile in the catalytic mechanism.

The protein belongs to the CobB/CbiA family. Mg(2+) serves as cofactor.

The enzyme catalyses cob(II)yrinate + 2 L-glutamine + 2 ATP + 2 H2O = cob(II)yrinate a,c diamide + 2 L-glutamate + 2 ADP + 2 phosphate + 2 H(+). It participates in cofactor biosynthesis; adenosylcobalamin biosynthesis; cob(II)yrinate a,c-diamide from sirohydrochlorin (anaerobic route): step 10/10. Its function is as follows. Catalyzes the ATP-dependent amidation of the two carboxylate groups at positions a and c of cobyrinate, using either L-glutamine or ammonia as the nitrogen source. This Caldanaerobacter subterraneus subsp. tengcongensis (strain DSM 15242 / JCM 11007 / NBRC 100824 / MB4) (Thermoanaerobacter tengcongensis) protein is Cobyrinate a,c-diamide synthase.